The chain runs to 490 residues: MSDDDFMQDSDQEYDFEYEDDEEEDTGDVDIENKYYNAKQTKTSDPEEALQEFLSIPPLEQEKGDWGFKALKQAIKLEFKLKRYQEATEHYEELLTYVKSAVTRNYSEKSIDNMLNYIEKGYDDPKAVQCIEKFYSLTLQCFQSTNNERLWLKTNIKLARLLLDRKDYHAVARKLRELHNACRKSDGTDDPSKGTYSLEIYALEIQMYSETRNNNQLKVLYQKALKVRSAVPHPKIQGVIRECGGKMHMSEENWKEAQSDFFEAFRNYDEAGDLRRIQVLKYLLLTTMLMKSDINPFDSQEMKPYRNDPRIFAMTELVDAYQRDDIYRYEDVLQKNTDLLADPFIAENIDEVTRNMRTKGVVKLIAPYTRMRISWLAERLRITEPEVMDILSFLIVDGRVKGRIDEHKGVLELESREDADHVQAITVLSEAVGNLFNAVFKSTDGFQPGQGDFMNSMADQSADIGSLDDTMRSMGSGKRGRRVGLTQRAY.

Residues 1 to 30 (MSDDDFMQDSDQEYDFEYEDDEEEDTGDVD) show a composition bias toward acidic residues. The interval 1–32 (MSDDDFMQDSDQEYDFEYEDDEEEDTGDVDIE) is disordered. Residues 250–418 (SEENWKEAQS…GVLELESRED (169 aa)) form the PCI domain. Residues 469–490 (DTMRSMGSGKRGRRVGLTQRAY) form a disordered region.

This sequence belongs to the CSN2 family. In terms of assembly, component of the COP9 signalosome (CSN) complex.

Its subcellular location is the cytoplasm. It localises to the nucleus. Its function is as follows. Component of the COP9 signalosome (CSN) complex that acts as an regulator of the ubiquitin (Ubl) conjugation pathway by mediating the deneddylation of the cullin subunit of SCF-type E3 ubiquitin-protein ligase complexes. The CSN complex is involved in the regulation of the circadian clock through its control of the stability of the SCF(FWD-1) complex. The chain is COP9 signalosome complex subunit 2 (csn-2) from Neurospora crassa (strain ATCC 24698 / 74-OR23-1A / CBS 708.71 / DSM 1257 / FGSC 987).